The sequence spans 864 residues: Leucine--tRNA ligase (864 aa).

Residues 42-52 (PYPSGKLHMGH) carry the 'HIGH' region motif. The 'KMSKS' region signature appears at 624-628 (KMSKS). K627 is an ATP binding site.

Belongs to the class-I aminoacyl-tRNA synthetase family.

Its subcellular location is the cytoplasm. The catalysed reaction is tRNA(Leu) + L-leucine + ATP = L-leucyl-tRNA(Leu) + AMP + diphosphate. In Burkholderia cenocepacia (strain ATCC BAA-245 / DSM 16553 / LMG 16656 / NCTC 13227 / J2315 / CF5610) (Burkholderia cepacia (strain J2315)), this protein is Leucine--tRNA ligase.